The chain runs to 80 residues: Putative defensin-like protein 15 (80 aa).

The signal sequence occupies residues 1-29 (MAKFASIITFIYAALVLFAAFEVPTMVEA). Q30 is modified (pyrrolidone carboxylic acid). 4 disulfides stabilise this stretch: C33/C80, C44/C65, C50/C74, and C54/C76.

It belongs to the DEFL family.

Its subcellular location is the secreted. Functionally, confers broad-spectrum resistance to pathogens. This is Putative defensin-like protein 15 (PDF1.2B) from Arabidopsis thaliana (Mouse-ear cress).